The chain runs to 296 residues: MSMGGDTTWVGKKPIRRIGGLSDALSIASDLGFAVAPPPSQEELQSFASSNGERGDDLIRVLRELSVVQRKIADLQVELQGRKDDKNVAHLTHVGEMQKKIETLSRITQILKDVIQNKDRIIARLQQPYSLDCIPVEAEYQKQFSELLMKAASDYGALTASVSDFQWSQNFKEPPSVWGEMLRPIPVALASCTRFFEAMSAMRESFATLQELRVGNSAVSLPTTPGGNEMTHRDSDCVTPPQGRIESSFDDLAVHKTRRQNNDQNEEEEEEEEEEDGNNNGNRRLSWPPSVKKSSV.

Coiled coils occupy residues 56-83 (DDLIRVLRELSVVQRKIADLQVELQGRK) and 253-285 (AVHKTRRQNNDQNEEEEEEEEEEDGNNNGNRRL). The tract at residues 218-296 (AVSLPTTPGG…WPPSVKKSSV (79 aa)) is disordered. Positions 264–277 (QNEEEEEEEEEEDG) are enriched in acidic residues.

It belongs to the HAUS2 family. As to quaternary structure, part of the augmin complex composed of 8 subunits. The complex acts on microtubules and interacts with gamma-tubulin in spindles and the phragmoplast.

In terms of biological role, contributes to the assembly of the acentrosomal spindle and phragmoplast microtubule arrays as part of the augmin complex. The polypeptide is AUGMIN subunit 2 (Arabidopsis thaliana (Mouse-ear cress)).